Here is a 181-residue protein sequence, read N- to C-terminus: Probable pyruvoyl-dependent arginine decarboxylase (181 aa).

At S43 the chain carries Pyruvic acid (Ser).

Belongs to the PdaD family. The cofactor is pyruvate.

It catalyses the reaction L-arginine + H(+) = agmatine + CO2. The polypeptide is Probable pyruvoyl-dependent arginine decarboxylase (Chlorobium phaeobacteroides (strain BS1)).